The chain runs to 107 residues: Chlorobenzene dioxygenase, ferredoxin component (107 aa).

Positions threonine 4 to valine 99 constitute a Rieske domain. Cysteine 43, histidine 45, cysteine 62, and histidine 65 together coordinate [2Fe-2S] cluster.

The protein belongs to the bacterial ring-hydroxylating dioxygenase ferredoxin component family. As to quaternary structure, this dioxygenase system consists of four proteins: the two subunits of the oxygenase component (TecA1 and TecA2), a ferredoxin (TecA3) and a ferredoxin reductase (TecA4). [2Fe-2S] cluster is required as a cofactor.

It functions in the pathway aromatic compound metabolism. Its function is as follows. Part of the chlorobenzene dioxygenase system that catalyzes the dihydroxylation of a range of aromatic compounds, including chlorinated benzenes and toluenes, and dinuclear aromatics such as biphenyl and dibenzo-p-dioxin. The sequence is that of Chlorobenzene dioxygenase, ferredoxin component from Cupriavidus sp. (strain PS12).